Reading from the N-terminus, the 347-residue chain is Phosphate acyltransferase (347 aa).

This sequence belongs to the PlsX family. Homodimer. Probably interacts with PlsY.

The protein localises to the cytoplasm. The enzyme catalyses a fatty acyl-[ACP] + phosphate = an acyl phosphate + holo-[ACP]. The protein operates within lipid metabolism; phospholipid metabolism. Catalyzes the reversible formation of acyl-phosphate (acyl-PO(4)) from acyl-[acyl-carrier-protein] (acyl-ACP). This enzyme utilizes acyl-ACP as fatty acyl donor, but not acyl-CoA. This Oleidesulfovibrio alaskensis (strain ATCC BAA-1058 / DSM 17464 / G20) (Desulfovibrio alaskensis) protein is Phosphate acyltransferase.